Reading from the N-terminus, the 292-residue chain is NAD kinase (292 aa).

Asp64 serves as the catalytic Proton acceptor. NAD(+)-binding positions include 64 to 65 (DG), 138 to 139 (ND), Arg149, Arg166, Asp168, 179 to 184 (TGYAVS), and Gln238.

This sequence belongs to the NAD kinase family. Requires a divalent metal cation as cofactor.

Its subcellular location is the cytoplasm. It catalyses the reaction NAD(+) + ATP = ADP + NADP(+) + H(+). Functionally, involved in the regulation of the intracellular balance of NAD and NADP, and is a key enzyme in the biosynthesis of NADP. Catalyzes specifically the phosphorylation on 2'-hydroxyl of the adenosine moiety of NAD to yield NADP. The polypeptide is NAD kinase (Oleidesulfovibrio alaskensis (strain ATCC BAA-1058 / DSM 17464 / G20) (Desulfovibrio alaskensis)).